The following is a 163-amino-acid chain: ATP synthase subunit b 1 (163 aa).

Residues 7 to 27 (AETWVAIAFVILMGIFAYLGV) form a helical membrane-spanning segment.

The protein belongs to the ATPase B chain family. As to quaternary structure, F-type ATPases have 2 components, F(1) - the catalytic core - and F(0) - the membrane proton channel. F(1) has five subunits: alpha(3), beta(3), gamma(1), delta(1), epsilon(1). F(0) has three main subunits: a(1), b(2) and c(10-14). The alpha and beta chains form an alternating ring which encloses part of the gamma chain. F(1) is attached to F(0) by a central stalk formed by the gamma and epsilon chains, while a peripheral stalk is formed by the delta and b chains.

The protein resides in the cell inner membrane. Functionally, f(1)F(0) ATP synthase produces ATP from ADP in the presence of a proton or sodium gradient. F-type ATPases consist of two structural domains, F(1) containing the extramembraneous catalytic core and F(0) containing the membrane proton channel, linked together by a central stalk and a peripheral stalk. During catalysis, ATP synthesis in the catalytic domain of F(1) is coupled via a rotary mechanism of the central stalk subunits to proton translocation. Component of the F(0) channel, it forms part of the peripheral stalk, linking F(1) to F(0). The sequence is that of ATP synthase subunit b 1 from Rhodopseudomonas palustris (strain HaA2).